The primary structure comprises 626 residues: Ankyrin repeat domain-containing protein 13B (626 aa).

Residue M1 is modified to N-acetylmethionine. ANK repeat units follow at residues 47–76 and 80–109; these read RGRT…DVGR and SGWT…YQRV. The segment at 442–470 is disordered; it reads PVPSVRGSPGSETPSPGSDSSSVSSSSST. Over residues 448 to 470 the composition is skewed to low complexity; the sequence is GSPGSETPSPGSDSSSVSSSSST. The 20-residue stretch at 503–522 folds into the UIM 1 domain; sequence EDDDLLRFAIQQSLLEAGSE. Positions 534–614 are disordered; that stretch reads NSKPGTHPMS…RRRVRQEEEE (81 aa). The span at 554-575 shows a compositional bias: pro residues; it reads PPTPQRQPMPPAPVPSPRPSPG. 2 UIM domains span residues 585–604 and 610–626; these read SYDE…QEER and QEEE…LTEQ.

As to quaternary structure, interacts with EGFR (ubiquitinated); the interaction is direct and may regulate EGFR internalization.

It localises to the cell membrane. Its subcellular location is the late endosome. It is found in the early endosome. Its function is as follows. Ubiquitin-binding protein that specifically recognizes and binds 'Lys-63'-linked ubiquitin. Does not bind 'Lys-48'-linked ubiquitin. Positively regulates the internalization of ligand-activated EGFR by binding to the Ub moiety of ubiquitinated EGFR at the cell membrane. This is Ankyrin repeat domain-containing protein 13B (Ankrd13b) from Mus musculus (Mouse).